Consider the following 377-residue polypeptide: Nucleosome assembly protein 1;3 (377 aa).

Residues V26 to E80 adopt a coiled-coil conformation. Residues L47–Q62 carry the Nuclear export signal motif. Residues K223 to K228 carry the Nuclear localization signal motif. Positions E298 to Q377 are disordered. The segment covering A300 to E341 has biased composition (acidic residues). A compositionally biased stretch (basic residues) spans K345–S357. At C374 the chain carries Cysteine methyl ester. The S-farnesyl cysteine moiety is linked to residue C374. Residues K375 to Q377 constitute a propeptide, removed in mature form.

Belongs to the nucleosome assembly protein (NAP) family. As to quaternary structure, can form homomeric and heteromeric protein complexes with NAP1;4. Binds histones H2A and H2B in vivo. Also able to bind histones H1 and H4 in vitro. Interacts with CYCB1;1 and with alpha tubulin.

It localises to the nucleus. It is found in the cytoplasm. In terms of biological role, may modulate chromatin structure by regulation of nucleosome assembly/disassembly. Could function together with B-type cyclins in the regulation of microtubule dynamics. The sequence is that of Nucleosome assembly protein 1;3 (NAP1;3) from Nicotiana tabacum (Common tobacco).